The sequence spans 223 residues: Cytidylate kinase (223 aa).

The disordered stretch occupies residues 1–23 (MSTSPLVIAIDGPSGSGKSSTSR). 12–20 (GPSGSGKSS) provides a ligand contact to ATP.

Belongs to the cytidylate kinase family. Type 1 subfamily.

The protein resides in the cytoplasm. The enzyme catalyses CMP + ATP = CDP + ADP. It catalyses the reaction dCMP + ATP = dCDP + ADP. In Cutibacterium acnes (strain DSM 16379 / KPA171202) (Propionibacterium acnes), this protein is Cytidylate kinase.